The chain runs to 189 residues: UPF0149 protein VFMJ11_2207 (189 aa).

Belongs to the UPF0149 family.

The sequence is that of UPF0149 protein VFMJ11_2207 from Aliivibrio fischeri (strain MJ11) (Vibrio fischeri).